The sequence spans 339 residues: Large ribosomal subunit protein uL10 (339 aa).

The segment at 307 to 339 is disordered; sequence VEEEKKEEKVEEEKEDEEASEEEALAGLSALFG. Over residues 308-318 the composition is skewed to basic and acidic residues; the sequence is EEEKKEEKVEE. A compositionally biased stretch (acidic residues) spans 319–330; it reads EKEDEEASEEEA.

This sequence belongs to the universal ribosomal protein uL10 family. As to quaternary structure, part of the 50S ribosomal subunit. Forms part of the ribosomal stalk which helps the ribosome interact with GTP-bound translation factors. Forms a heptameric L10(L12)2(L12)2(L12)2 complex, where L10 forms an elongated spine to which the L12 dimers bind in a sequential fashion.

In terms of biological role, forms part of the ribosomal stalk, playing a central role in the interaction of the ribosome with GTP-bound translation factors. This is Large ribosomal subunit protein uL10 from Pyrococcus furiosus (strain ATCC 43587 / DSM 3638 / JCM 8422 / Vc1).